Here is a 136-residue protein sequence, read N- to C-terminus: Organic hydroperoxide resistance protein OhrB (136 aa).

Belongs to the OsmC/Ohr family.

Its function is as follows. Involved in organic hydroperoxide resistance. This Bacillus subtilis (strain 168) protein is Organic hydroperoxide resistance protein OhrB (ohrB).